Here is a 413-residue protein sequence, read N- to C-terminus: Multidrug resistance protein MdtA (413 aa).

The signal sequence occupies residues methionine 1–alanine 25. Residues alanine 394–threonine 413 form a disordered region.

Belongs to the membrane fusion protein (MFP) (TC 8.A.1) family. In terms of assembly, part of a tripartite efflux system composed of MdtA, MdtB and MdtC.

The protein localises to the cell inner membrane. In Xenorhabdus bovienii (strain SS-2004) (Xenorhabdus nematophila subsp. bovienii), this protein is Multidrug resistance protein MdtA.